Consider the following 433-residue polypeptide: GTPase Obg (433 aa).

An Obg domain is found at 1–158 (MFVDQVKIYV…RNVILELKLL (158 aa)). The OBG-type G domain maps to 159–329 (ADVGLVGFPS…LLFAIADLLE (171 aa)). GTP-binding positions include 165–172 (GFPSVGKS), 190–194 (FTTLV), 212–215 (DLPG), 282–285 (NKMD), and 310–312 (SAA). Mg(2+) contacts are provided by Ser172 and Thr192. Residues 350–428 (KYEKEELPFT…LLDYEFEFVD (79 aa)) form the OCT domain.

The protein belongs to the TRAFAC class OBG-HflX-like GTPase superfamily. OBG GTPase family. In terms of assembly, monomer. Mg(2+) serves as cofactor.

Its subcellular location is the cytoplasm. In terms of biological role, an essential GTPase which binds GTP, GDP and possibly (p)ppGpp with moderate affinity, with high nucleotide exchange rates and a fairly low GTP hydrolysis rate. Plays a role in control of the cell cycle, stress response, ribosome biogenesis and in those bacteria that undergo differentiation, in morphogenesis control. This Geobacillus thermodenitrificans (strain NG80-2) protein is GTPase Obg.